The primary structure comprises 418 residues: Glycine betaine transport ATP-binding protein OpuAA (418 aa).

Residues 34-270 enclose the ABC transporter domain; it reads KTKKEILKAT…PSNEYVEKFV (237 aa). Residue 66-73 coordinates ATP; sequence GLSGSGKS. CBS domains are found at residues 284 to 340 and 344 to 403; these read IMKR…DLSL and LNTE…INAE.

Belongs to the ABC transporter superfamily. In terms of assembly, the complex is composed of two ATP-binding proteins (OpuAA), two transmembrane proteins (OpuAB) and a solute-binding protein (OpuAC).

The catalysed reaction is a quaternary ammonium(out) + ATP + H2O = a quaternary ammonium(in) + ADP + phosphate + H(+). Involved in a multicomponent binding-protein-dependent transport system for glycine betaine. Probably responsible for energy coupling to the transport system. The chain is Glycine betaine transport ATP-binding protein OpuAA (opuAA) from Bacillus subtilis (strain 168).